A 116-amino-acid chain; its full sequence is HTH-type transcriptional regulator SarV (116 aa).

Positions 51–74 form a DNA-binding region, H-T-H motif; sequence RDTLHFEMLWDTSKIDVIIRKIYK.

This sequence belongs to the SarA family.

The protein localises to the cytoplasm. Part of the pathway by which MgrA and SarA control autolysis. This Staphylococcus aureus (strain Mu50 / ATCC 700699) protein is HTH-type transcriptional regulator SarV (sarV).